The sequence spans 445 residues: UPF0210 protein LACR_1020 (445 aa).

This sequence belongs to the UPF0210 family. Homodimer.

The polypeptide is UPF0210 protein LACR_1020 (Lactococcus lactis subsp. cremoris (strain SK11)).